A 364-amino-acid polypeptide reads, in one-letter code: RNA-binding protein ZC3H11 (364 aa).

The C3H1-type zinc finger occupies 64–92 (RYKTKLCKNFVQYGTCPYDIRCMFAHGEE). Positions 194 to 199 (VRHNPY) match the MKT1-binding motif motif. Residues 340-364 (EQSQSHLKREGNEGRGEGLHMFLSL) form a disordered region. Positions 346-357 (LKREGNEGRGEG) are enriched in basic and acidic residues.

In terms of assembly, interacts (via MKT1-binding motif) with MKT1. Interacts with PBP1 (via C-terminus); the interaction is direct. In terms of processing, phosphorylated at the N-terminus. CK1.2-dependent phosphorylation may lead to proteasome-dependent degradation of ZC3H11 in absence of stress.

The protein localises to the cytoplasm. Functionally, RNA-binding protein involved in regulation of mRNA stability. Binds AU-rich regions in the 3'-UTR of mRNAs and promotes their stabilization by recruiting a MKT1-containing complex. Stabilizes chaperone mRNAs during stress that causes an accumulation of misfolded or unfolded proteins in the cytoplasm. This chain is RNA-binding protein ZC3H11, found in Trypanosoma brucei brucei (strain 927/4 GUTat10.1).